The chain runs to 548 residues: Cilia- and flagella-associated protein 97 (548 aa).

Serine 8 and serine 19 each carry phosphoserine. 3 disordered regions span residues 85-297 (NYLT…RQEN), 407-431 (LSRQ…PPKL), and 497-548 (YSPL…LRSH). A compositionally biased stretch (basic and acidic residues) spans 91 to 107 (GNERKPKFPSKEQHVEN). Over residues 112 to 121 (TRSPSLLTSS) the composition is skewed to low complexity. The segment covering 152 to 161 (DYYTDGEESS) has biased composition (acidic residues). Position 155 is a phosphothreonine (threonine 155). Residues serine 160 and serine 161 each carry the phosphoserine modification. Residues 191-209 (KASSSSLSSSSSRSSSDCS) are compositionally biased toward low complexity. Positions 214 to 237 (DMQNKPDSGSSGKRVSSVTPSSPK) are enriched in polar residues. The residue at position 235 (serine 235) is a Phosphoserine. The segment covering 238–248 (QKCKSGRKSSA) has biased composition (basic residues). Serine 259 carries the phosphoserine modification. The span at 264–289 (TDVTPASTPDSSPAQPFELSQSQNQK) shows a compositional bias: polar residues. A coiled-coil region spans residues 383-460 (RKNYSFTREE…ALLKRLEAVK (78 aa)). 2 stretches are compositionally biased toward polar residues: residues 504-514 (SRTSSATSGLS) and 537-548 (IQCSNSKVLRSH).

It belongs to the CFAP97 family.

The chain is Cilia- and flagella-associated protein 97 from Rattus norvegicus (Rat).